Here is a 474-residue protein sequence, read N- to C-terminus: PRAME family member 7 (474 aa).

The stretch at 97 to 122 is one LRR 1; degenerate repeat; the sequence is QSKLQVLDLRNVDENFCDIFSGATAS. One copy of the LRR 2; degenerate repeat lies at 177–201; that stretch reads HVCCKELQVFGMPIHSIIEVLNMVE. One copy of the LRR 3; degenerate repeat lies at 202 to 228; sequence LDCIQEVEVCCPWELSTLVKFAPYLGQ. The stretch at 229-264 is one LRR 4; degenerate repeat; sequence MRNLRKLVLFNIRASACIPPDNKGQFIARFTSQFLK. LRR repeat units lie at residues 265–290, 291–322, 323–341, 347–374, and 375–399; these read LDYF…LRCL, QASL…RQLK, ELDL…PLTG, VATL…VLSR, and CSQL…LLRH.

It belongs to the PRAME family.

The polypeptide is PRAME family member 7 (Homo sapiens (Human)).